A 2641-amino-acid polypeptide reads, in one-letter code: Inverse autotransporter adhesin YeeJ (2641 aa).

A signal peptide spans 1-25; it reads MGIKLRRLTAGICLITQLVFPMAAA. A LysM domain is found at 50 to 98; the sequence is VPYTLGALESAQSVAERFGISVAELRKLNQFRTFARGFDNVRQGDELDV. Residues 125 to 400 form an inverse autotransporter region; that stretch reads TSQQIGSLLA…SRFDLVDRNN (276 aa). The segment at 513–605 is invasin 3 domain; it reads QKDSSVSLSS…GVDAAKAPAV (93 aa). 17 Big-1 domains span residues 617–711, 721–815, 822–913, 920–1017, 1024–1116, 1123–1220, 1227–1319, 1326–1423, 1430–1523, 1531–1633, 1641–1734, 1741–1837, 1844–1941, 1948–2032, 2048–2141, 2142–2235, and 2244–2336; these read HSSI…AGFI, IATL…VSFV, QVDL…VIFI, ALTL…MTFV, VVVL…VNIA, QVTL…VTFV, LVVL…VHFI, IIEL…SINV, HLTL…VTYV, EISL…VNFI, QVNL…VTLI, KLAS…PTEV, ITSL…VIDQ, KLTL…IVKV, and VASF…ITLV. Positions 2538–2641 are C-type lectin domain; it reads KSWWVNAGDA…FAYATCYKNL (104 aa).

Belongs to the intimin/invasin family.

Its subcellular location is the cell outer membrane. Its function is as follows. A probable inverse autotransporter, it may be involved in biofilm formation and cell adhesion. May bind peptidoglycan via its LysM domain. This is Inverse autotransporter adhesin YeeJ (yeeJ) from Escherichia coli O157:H7.